A 341-amino-acid polypeptide reads, in one-letter code: Short chain dehydrogenase virL (341 aa).

NADP(+) is bound by residues L49, K74, D97, N123, Y210, and K214. Residue Y210 is the Proton donor of the active site. The active-site Lowers pKa of active site Tyr is the K214.

This sequence belongs to the short-chain dehydrogenases/reductases (SDR) family.

It functions in the pathway secondary metabolite biosynthesis. Short chain dehydrogenase; part of the gene cluster that mediates the biosynthesis of virensols and trichoxide, fungal natural products that contain or are derived from a salicylaldehyde core. The pathway begins with the synthesis of the reduced chain in virensol C by the highly reducing polyketide synthase virA via condensation of one acetate and 8 malonate units. VirA has interesting programming rules since the first 2 ketides are fully reduced, the 3 following ketides undergo beta-dehydration, and the last 3 ketides are only reduced to beta-hydroxys to yield the trihydroxy portion. The production of aldehyde virensol C by virA alone is surprising, since virA does not contain a reductase (R) domain that is typically associated with reductive product release in HRPKS. The cupin-domain enzyme virC is involved in enhancing virA product turnover. The short-chain dehydrogenase virB then oxidizes the C-7 alcohol of virensol C to a ketone, yielding virensol D. Virensol D is further transformed to salicylaldehyde 5-deoxyaurocitrin by the short-chain dehydrogenase virD. VirD catalyzes the dehydrogenation of C-3 to form the beta-ketone aldehyde, which is followed by the generation of the nucleophilic C-2 that is required for the intramolecular aldol condensation between C-2 and C-7, itself followed by dehydration and aromatization which leads to salicylaldehyde 5-deoxyaurocitrin. While the dehydrogenation of virensol D is definitely catalyzed by virD, the aldol condensation and dehydration may be uncatalyzed or assisted by virD. The short chain dehydrogenase virG then converts salicylaldehyde 5-deoxyaurocitrin into virensol B which is further hydroxylated by the cytochrome P450 monooxygenase virE to yield the hydroquinone virensol A. VirI then may oxidize virensol A to form the quinone, while virH performs the epoxidation. Finally, the two remaining short-chain dehydrogenases, virK and virL, are probably responsible for reducing the ketones to the corresponding alcohols to furnish the epoxycyclohexanol structure in trichoxide. This is Short chain dehydrogenase virL from Hypocrea virens (strain Gv29-8 / FGSC 10586) (Gliocladium virens).